Here is a 195-residue protein sequence, read N- to C-terminus: FK506-binding protein 2 (195 aa).

Residues 1-19 (MKAALFLSALASTAVGVVA) form the signal peptide. Residues 39-127 (GDGVHMHYRG…VFETELVGID (89 aa)) form the PPIase FKBP-type domain. The Prevents secretion from ER motif lies at 192–195 (HEEL).

This sequence belongs to the FKBP-type PPIase family. FKBP2 subfamily.

It localises to the endoplasmic reticulum. It catalyses the reaction [protein]-peptidylproline (omega=180) = [protein]-peptidylproline (omega=0). Its activity is regulated as follows. Inhibited by both FK506 and rapamycin. Functionally, PPIases accelerate the folding of proteins. It catalyzes the cis-trans isomerization of proline imidic peptide bonds in oligopeptides. The polypeptide is FK506-binding protein 2 (FPR2) (Gibberella zeae (strain ATCC MYA-4620 / CBS 123657 / FGSC 9075 / NRRL 31084 / PH-1) (Wheat head blight fungus)).